Reading from the N-terminus, the 320-residue chain is Methyltransferase gedG (320 aa).

A methyltransferase domain region spans residues 61–154; sequence DAGAGNGVYS…QLRPGGTFAC (94 aa). Residues 231–252 are disordered; the sequence is GLLPPERRGEVTEPDHEGPHDQ. Positions 235 to 252 are enriched in basic and acidic residues; it reads PERRGEVTEPDHEGPHDQ.

The protein belongs to the methyltransferase superfamily.

It participates in secondary metabolite biosynthesis. In terms of biological role, methyltransferase; part of the gene cluster that mediates the biosynthesis of geodin, an intermediate in the biosynthesis of other natural products. The pathway begins with the synthesis of atrochrysone thioester by the polyketide synthase (PKS) gedC. The atrochrysone carboxyl ACP thioesterase gedB then breaks the thioester bond and releases the atrochrysone carboxylic acid from gedC. The atrochrysone carboxylic acid is then converted to atrochrysone which is further transformed into emodinanthrone. The next step is performed by the emodinanthrone oxygenase gedH that catalyzes the oxidation of emodinanthrone to emodin. Emodin O-methyltransferase encoded probably by gedA then catalyzes methylation of the 8-hydroxy group of emodin to form questin. Ring cleavage of questin by questin oxidase gedK leads to desmethylsulochrin via several intermediates including questin epoxide. Another methylation step probably catalyzed by methyltransferase gedG leads to the formation of sulochrin which is further converted to dihydrogeodin by the sulochrin halogenase gedL. Finally, the dihydrogeodin oxidase gedJ catalyzes the stereospecific phenol oxidative coupling reaction converting dihydrogeodin to geodin. This Aspergillus terreus (strain NIH 2624 / FGSC A1156) protein is Methyltransferase gedG.